The sequence spans 1383 residues: Spike glycoprotein (1383 aa).

The N-terminal stretch at 1-25 is a signal peptide; it reads MRSLIYFWLLLPVLPTLSLPQDVTR. The tract at residues 26 to 734 is S1; the sequence is CQSTTNFRRF…TRELPGFFYH (709 aa). Topologically, residues 26-1324 are virion surface; that stretch reads CQSTTNFRRF…NRVETYIKWP (1299 aa). Residues 617 to 745 form an interaction with host ANPEP region; the sequence is FQFTKGELIT…NDGSNCTEPV (129 aa). Positions 735–1383 are S2; sequence SNDGSNCTEP…YEAFEKVHVQ (649 aa). The segment at 955-975 is fusion peptide; the sequence is IGGMALGGITAAAALPFSYAV. Residues 969-1088 form a heptad repeat 1 (HR1) region; the sequence is LPFSYAVQAR…QVDRLITGRL (120 aa). 2 coiled-coil regions span residues 1036-1080 and 1272-1314; these read QEVV…DVQV and TYLN…LEWL. A heptad repeat 2 (HR2) region spans residues 1240–1336; the sequence is PDYIDVNKTL…VWLIIVIVLI (97 aa). A helical membrane pass occupies residues 1325 to 1344; the sequence is WWVWLIIVIVLIFVVSLLVF. Residues 1345-1383 are Intravirion-facing; sequence CCISTGCCGCCGCCGACFSGCCRGPRLQPYEAFEKVHVQ. The KxHxx motif lies at 1379 to 1383; that stretch reads KVHVQ.

The protein belongs to the alphacoronaviruses spike protein family. As to quaternary structure, homotrimer. During virus morphogenesis, found in a complex with M and HE proteins. Interacts with host ANPEP.

It is found in the virion membrane. The protein localises to the host endoplasmic reticulum-Golgi intermediate compartment membrane. S1 region attaches the virion to the cell membrane by interacting with host ANPEP/aminopeptidase N, initiating the infection. Binding to the receptor probably induces conformational changes in the S glycoprotein unmasking the fusion peptide of S2 region and activating membranes fusion. S2 region belongs to the class I viral fusion protein. Under the current model, the protein has at least 3 conformational states: pre-fusion native state, pre-hairpin intermediate state, and post-fusion hairpin state. During viral and target cell membrane fusion, the coiled coil regions (heptad repeats) regions assume a trimer-of-hairpins structure, positioning the fusion peptide in close proximity to the C-terminal region of the ectodomain. The formation of this structure appears to drive apposition and subsequent fusion of viral and target cell membranes. The chain is Spike glycoprotein from Porcine epidemic diarrhea virus (strain CV777) (PEDV).